The chain runs to 337 residues: Perakine reductase (337 aa).

Tyr57 serves as the catalytic Proton donor. His126 provides a ligand contact to substrate. 205 to 214 (SPIGRGLFAG) is a binding site for NADP(+).

The protein belongs to the aldo/keto reductase family.

The catalysed reaction is raucaffrinoline + NADP(+) = perakine + NADPH + H(+). Aldo-keto reductase involved in the biosynthesis of monoterpenoid indole alkaloids. Broad substrate specificity enzyme with a high selectivity in the group of alkaloids. Can use perakine, 19(S),20(R)-dihydro-peraksine-17,21-al, cinnamic aldehyde, p-coumaric aldehyde and 3-(3,4,5-trimethoxyphenyl)propanal as substrates, but not ketosteroids such as progesterone. NADPH could not be replaced by NADH. The protein is Perakine reductase (PR) of Rauvolfia serpentina (Serpentine wood).